A 762-amino-acid polypeptide reads, in one-letter code: N,N-dimethylformamidase beta subunit (762 aa).

Heterotetramer of two DmfA1 (alpha) and two DmfA2 (beta) subunits.

It carries out the reaction N,N-dimethylformamide + H2O = dimethylamine + formate. Its function is as follows. Hydrolyzes N,N-dimethylformamide, and to a lesser extent N,N-dimethylacetamide and N,N-diethylacetamide. Has no activity against the substituted amides N-methylformamide, N-ethylformamide, N-ethylformamide and N-methylacetamide or the unsubstituted amides formamide, nicotinamide, acetoamide, benzamide, acetamide and acrylamide. This chain is N,N-dimethylformamidase beta subunit, found in Paracoccus aminophilus.